A 248-amino-acid chain; its full sequence is Pulmonary surfactant-associated protein A1 (248 aa).

Residues 1–20 form the signal peptide; that stretch reads MWLCPLALNLILMAASGAVC. Positions 28-100 constitute a Collagen-like domain; it reads GSPGIPGTPG…PGERGPPGLP (73 aa). 9 positions are modified to 4-hydroxyproline: proline 30, proline 33, proline 36, proline 42, proline 54, proline 57, proline 63, proline 67, and proline 70. Residues 31 to 101 form a disordered region; it reads GIPGTPGSHG…GERGPPGLPA (71 aa). The segment covering 42–51 has biased composition (basic and acidic residues); the sequence is PGRDGRDGLK. A compositionally biased stretch (pro residues) spans 54-70; it reads PGPPGPMGPPGEMPCPP. The C-type lectin domain maps to 132 to 248; that stretch reads MTVGEKVFSS…LYSRLTICEF (117 aa). Cystine bridges form between cysteine 155–cysteine 246 and cysteine 224–cysteine 238. Residue asparagine 207 is glycosylated (N-linked (GlcNAc...) asparagine).

The protein belongs to the SFTPA family. As to quaternary structure, oligomeric complex of 6 set of homotrimers. Interacts with CD93. In terms of assembly, (Microbial infection) Binds M.bovis cell surface protein Apa via its glycosylated sites; probably also recognizes other bacterial moieties. (Microbial infection) Binds to the S.aureus extracellular adherence protein, Eap, thereby enhancing phagocytosis and killing of S.aureus by alveolar macrophages. As to quaternary structure, (Microbial infection) Interacts with M.pneumoniae CARDS toxin; CARDS probably uses this protein as a receptor. Post-translationally, N-acetylated.

The protein localises to the secreted. It is found in the extracellular space. It localises to the extracellular matrix. The protein resides in the surface film. In presence of calcium ions, it binds to surfactant phospholipids and contributes to lower the surface tension at the air-liquid interface in the alveoli of the mammalian lung and is essential for normal respiration. Enhances the expression of MYO18A/SP-R210 on alveolar macrophages. Its function is as follows. (Microbial infection) Recognition of M.tuberculosis by dendritic cells may occur partially via this molecule. Can recognize, bind, and opsonize pathogens to enhance their elimination by alveolar macrophages. Functionally, (Microbial infection) Binds M.pneumoniae CARDS toxin, serves as one receptor for this pathogen. When SFTPA1 is down-regulated by siRNA, less toxin binds to human cells and less vacuolization (a symptom of M.pneumoniae infection) is seen. The sequence is that of Pulmonary surfactant-associated protein A1 (SFTPA1) from Homo sapiens (Human).